A 324-amino-acid chain; its full sequence is Beta-ketoacyl-[acyl-carrier-protein] synthase III (324 aa).

Active-site residues include cysteine 112 and histidine 249. The ACP-binding stretch occupies residues 250 to 254 (QANRR). The active site involves asparagine 279.

It belongs to the thiolase-like superfamily. FabH family. Homodimer.

It localises to the cytoplasm. It carries out the reaction malonyl-[ACP] + acetyl-CoA + H(+) = 3-oxobutanoyl-[ACP] + CO2 + CoA. It functions in the pathway lipid metabolism; fatty acid biosynthesis. Its function is as follows. Catalyzes the condensation reaction of fatty acid synthesis by the addition to an acyl acceptor of two carbons from malonyl-ACP. Catalyzes the first condensation reaction which initiates fatty acid synthesis and may therefore play a role in governing the total rate of fatty acid production. Possesses both acetoacetyl-ACP synthase and acetyl transacylase activities. Its substrate specificity determines the biosynthesis of branched-chain and/or straight-chain of fatty acids. The chain is Beta-ketoacyl-[acyl-carrier-protein] synthase III from Streptococcus equi subsp. zooepidemicus (strain MGCS10565).